Reading from the N-terminus, the 313-residue chain is Probable cell division protein WhiA (313 aa).

Residues 278-311 (SLKELGKLLDPPLSKSGVNHRLRRIKSIANEIRG) constitute a DNA-binding region (H-T-H motif).

It belongs to the WhiA family.

Functionally, involved in cell division and chromosome segregation. This chain is Probable cell division protein WhiA, found in Halothermothrix orenii (strain H 168 / OCM 544 / DSM 9562).